Consider the following 133-residue polypeptide: Small ribosomal subunit protein uS11 (133 aa).

Belongs to the universal ribosomal protein uS11 family. Part of the 30S ribosomal subunit. Interacts with proteins S7 and S18. Binds to IF-3.

Located on the platform of the 30S subunit, it bridges several disparate RNA helices of the 16S rRNA. Forms part of the Shine-Dalgarno cleft in the 70S ribosome. The chain is Small ribosomal subunit protein uS11 from Cupriavidus metallidurans (strain ATCC 43123 / DSM 2839 / NBRC 102507 / CH34) (Ralstonia metallidurans).